Consider the following 419-residue polypeptide: uncharacterized protein (419 aa).

Cys38, Cys44, Cys47, and Cys126 together coordinate [4Fe-4S] cluster. 4 residues coordinate S-adenosyl-L-methionine: Gln250, Tyr280, Glu301, and Asp346. Cys373 functions as the Nucleophile in the catalytic mechanism.

It belongs to the class I-like SAM-binding methyltransferase superfamily. RNA M5U methyltransferase family.

This is an uncharacterized protein from Prochlorococcus marinus (strain SARG / CCMP1375 / SS120).